The sequence spans 214 residues: Thiamine-phosphate synthase (214 aa).

4-amino-2-methyl-5-(diphosphooxymethyl)pyrimidine-binding positions include 39 to 43 (QYRFK) and N71. Residues D72 and D91 each contribute to the Mg(2+) site. Residue S110 participates in 4-amino-2-methyl-5-(diphosphooxymethyl)pyrimidine binding. 136-138 (TKT) is a 2-[(2R,5Z)-2-carboxy-4-methylthiazol-5(2H)-ylidene]ethyl phosphate binding site. K139 provides a ligand contact to 4-amino-2-methyl-5-(diphosphooxymethyl)pyrimidine. 2-[(2R,5Z)-2-carboxy-4-methylthiazol-5(2H)-ylidene]ethyl phosphate is bound by residues G166 and 186 to 187 (VS).

This sequence belongs to the thiamine-phosphate synthase family. Mg(2+) serves as cofactor.

It carries out the reaction 2-[(2R,5Z)-2-carboxy-4-methylthiazol-5(2H)-ylidene]ethyl phosphate + 4-amino-2-methyl-5-(diphosphooxymethyl)pyrimidine + 2 H(+) = thiamine phosphate + CO2 + diphosphate. It catalyses the reaction 2-(2-carboxy-4-methylthiazol-5-yl)ethyl phosphate + 4-amino-2-methyl-5-(diphosphooxymethyl)pyrimidine + 2 H(+) = thiamine phosphate + CO2 + diphosphate. The enzyme catalyses 4-methyl-5-(2-phosphooxyethyl)-thiazole + 4-amino-2-methyl-5-(diphosphooxymethyl)pyrimidine + H(+) = thiamine phosphate + diphosphate. Its pathway is cofactor biosynthesis; thiamine diphosphate biosynthesis; thiamine phosphate from 4-amino-2-methyl-5-diphosphomethylpyrimidine and 4-methyl-5-(2-phosphoethyl)-thiazole: step 1/1. Its function is as follows. Condenses 4-methyl-5-(beta-hydroxyethyl)thiazole monophosphate (THZ-P) and 2-methyl-4-amino-5-hydroxymethyl pyrimidine pyrophosphate (HMP-PP) to form thiamine monophosphate (TMP). The chain is Thiamine-phosphate synthase from Hydrogenobaculum sp. (strain Y04AAS1).